We begin with the raw amino-acid sequence, 366 residues long: Aminomethyltransferase (366 aa).

The protein belongs to the GcvT family. As to quaternary structure, the glycine cleavage system is composed of four proteins: P, T, L and H.

It catalyses the reaction N(6)-[(R)-S(8)-aminomethyldihydrolipoyl]-L-lysyl-[protein] + (6S)-5,6,7,8-tetrahydrofolate = N(6)-[(R)-dihydrolipoyl]-L-lysyl-[protein] + (6R)-5,10-methylene-5,6,7,8-tetrahydrofolate + NH4(+). In terms of biological role, the glycine cleavage system catalyzes the degradation of glycine. This Bordetella bronchiseptica (strain ATCC BAA-588 / NCTC 13252 / RB50) (Alcaligenes bronchisepticus) protein is Aminomethyltransferase.